The sequence spans 275 residues: Ribosomal RNA small subunit methyltransferase A (275 aa).

6 residues coordinate S-adenosyl-L-methionine: asparagine 15, leucine 17, glycine 42, glutamate 63, aspartate 88, and asparagine 111.

It belongs to the class I-like SAM-binding methyltransferase superfamily. rRNA adenine N(6)-methyltransferase family. RsmA subfamily.

Its subcellular location is the cytoplasm. It carries out the reaction adenosine(1518)/adenosine(1519) in 16S rRNA + 4 S-adenosyl-L-methionine = N(6)-dimethyladenosine(1518)/N(6)-dimethyladenosine(1519) in 16S rRNA + 4 S-adenosyl-L-homocysteine + 4 H(+). Specifically dimethylates two adjacent adenosines (A1518 and A1519) in the loop of a conserved hairpin near the 3'-end of 16S rRNA in the 30S particle. May play a critical role in biogenesis of 30S subunits. This chain is Ribosomal RNA small subunit methyltransferase A, found in Geobacter metallireducens (strain ATCC 53774 / DSM 7210 / GS-15).